The sequence spans 513 residues: Homeobox and leucine zipper protein Homez (513 aa).

Residues 31 to 90 constitute a DNA-binding region (homeobox 1); the sequence is WTQAVQTSELDGNEHLLQAFSYFPYPSLADIALLCLRHGLQMEKVKTWFMAQRLRCGISW. Residues Lys-156, Lys-174, and Lys-176 each participate in a glycyl lysine isopeptide (Lys-Gly) (interchain with G-Cter in SUMO2) cross-link. Disordered regions lie at residues 200–221, 241–287, 303–328, 402–429, and 480–513; these read LSKE…ASWN, SCKE…SFSP, RLRN…HQRK, PAIS…PPPD, and LDEE…IIRD. A compositionally biased stretch (gly residues) spans 205 to 217; it reads AGGGPDQSCGGGT. A compositionally biased stretch (low complexity) spans 248 to 260; the sequence is PSGTPPSSSASSP. A Phosphoserine modification is found at Ser-320. 2 consecutive DNA-binding regions (homeobox) follow at residues 324–384 and 418–477; these read QHQR…KHGQ and TPPL…AEVV. Residues 327-332 carry the Nuclear localization signal motif; that stretch reads RKTKRK. Thr-418 carries the post-translational modification Phosphothreonine. Over residues 419 to 429 the composition is skewed to pro residues; that stretch reads PPLPAPPPPPD.

Homodimer or heterodimer (Potential). Interacts with HOXC8.

The protein resides in the nucleus. Functionally, may function as a transcriptional regulator. The chain is Homeobox and leucine zipper protein Homez (Homez) from Rattus norvegicus (Rat).